Consider the following 269-residue polypeptide: MDRYQELFNRLAAKNEGAFVPFVTIGDPTPEQSMKIIDTLVASGADALELGIPFSDPLADGPTIQAATIRALESGTTPIVCFELLTQIRAKYPDMPIGLLMYANLVFTAGIETFYKKCADAGVDSVLIADVPIKESEEFRVAAEKYGIHPIFIAPPNATDETLKSVSELGGGYTYLLSRAGVTGAETKAGKPIRHLVESLTKHNAPPALLGFGISEPAQVKEAIEAGAAGAISGSAVVKIIENNLSDHTAMLDNLGQFIRDMKAASKLS.

Catalysis depends on proton acceptor residues Glu49 and Asp60.

Belongs to the TrpA family. Tetramer of two alpha and two beta chains.

It carries out the reaction (1S,2R)-1-C-(indol-3-yl)glycerol 3-phosphate + L-serine = D-glyceraldehyde 3-phosphate + L-tryptophan + H2O. It functions in the pathway amino-acid biosynthesis; L-tryptophan biosynthesis; L-tryptophan from chorismate: step 5/5. Its function is as follows. The alpha subunit is responsible for the aldol cleavage of indoleglycerol phosphate to indole and glyceraldehyde 3-phosphate. In Photobacterium profundum (strain SS9), this protein is Tryptophan synthase alpha chain.